Consider the following 1670-residue polypeptide: Hemolymph clottable protein (1670 aa).

A signal peptide spans 1–14; it reads MKALILLLLGACQA. Positions 15 to 674 are vittelogenin; it reads LQPGLEYQYR…FANFVTTTIY (660 aa). The 750-residue stretch at 15-764 folds into the Vitellogenin domain; that stretch reads LQPGLEYQYR…LKIDGQQRGL (750 aa). Residue N106 is glycosylated (N-linked (GlcNAc...) asparagine). The segment covering 198–231 has biased composition (low complexity); the sequence is SSYTTKTKSKTSSKTSSKTSSKTSSKTSKTGKTS. The segment at 198 to 236 is disordered; it reads SSYTTKTKSKTSSKTSSKTSSKTSSKTSKTGKTSPGQLA. Residues N319, N459, and N1301 are each glycosylated (N-linked (GlcNAc...) asparagine). The VWFD domain maps to 1390–1550; the sequence is VSCTIDETKV…SWASPGEGCA (161 aa). 2 disulfides stabilise this stretch: C1392-C1513 and C1414-C1549.

In terms of assembly, homodimer; disulfide-linked. Also exists as oligomers. Glycosylated. Contains mannose and N-acetylglucosamine. Post-translationally, substrate of transglutaminase. In terms of tissue distribution, widely expressed with highest levels in gill and heart. Not expressed in hemocytes.

Its subcellular location is the secreted. In terms of biological role, forms stable clots in the presence of calcium. This Penaeus monodon (Giant tiger prawn) protein is Hemolymph clottable protein.